The following is an 873-amino-acid chain: Alanine--tRNA ligase (873 aa).

Zn(2+)-binding residues include H562, H566, C663, and H667.

It belongs to the class-II aminoacyl-tRNA synthetase family. Requires Zn(2+) as cofactor.

Its subcellular location is the cytoplasm. It catalyses the reaction tRNA(Ala) + L-alanine + ATP = L-alanyl-tRNA(Ala) + AMP + diphosphate. Functionally, catalyzes the attachment of alanine to tRNA(Ala) in a two-step reaction: alanine is first activated by ATP to form Ala-AMP and then transferred to the acceptor end of tRNA(Ala). Also edits incorrectly charged Ser-tRNA(Ala) and Gly-tRNA(Ala) via its editing domain. The protein is Alanine--tRNA ligase of Bordetella petrii (strain ATCC BAA-461 / DSM 12804 / CCUG 43448).